We begin with the raw amino-acid sequence, 391 residues long: 3-ketoacyl-CoA thiolase (391 aa).

The active-site Acyl-thioester intermediate is the Cys-90. Residues His-347 and Cys-377 each act as proton acceptor in the active site.

The protein belongs to the thiolase-like superfamily. Thiolase family.

It catalyses the reaction an acyl-CoA + acetyl-CoA = a 3-oxoacyl-CoA + CoA. It functions in the pathway lipid metabolism; fatty acid beta-oxidation. Functionally, involved in the degradation of long-chain fatty acids. The sequence is that of 3-ketoacyl-CoA thiolase (fadA) from Bacillus subtilis (strain 168).